The chain runs to 460 residues: MTGYSTNMRIKLPLFCLILQFITIILFAVFVRYDHESDARGWHDELKNHSTANADNDFYFRYPSFQDVHVMIFIGFGFLMTFLKRYGFSSVAFNFLIAAFGLQWSTLIQGFFHGFHDGKIHVGIESMINADFCTGAVLISFGAVLGKTSPVQLIVMTLIEVTLFGINEYIILNIVGAKDAGGSMTIHTFGAYFGLIVSRVLYRADLDKSRQREGSVYHSDLFAMIGTIYLWMFWPSFNSAVTAHGDDQHRTVLNTYYSLAACTLATFGFSALLNGEGKLDMVHIQNAALAGGVAVGTSGEMMLTPFGAMIAGTLAGIVSVLGYKYLTPVLDSKLKIQDTCGVHNLHGMPGILGAVIGAIVALFATADIYGDGMDDVFPMIFDGSRTAKQQSLYQFLALLVALGFAIVGGTVVGFILKLPLFGTPSDAECFEDAVYWEVPGGEGHQQLTVVVNNEDPDTQA.

Residues 1–10 are Cytoplasmic-facing; that stretch reads MTGYSTNMRI. The chain crosses the membrane as a helical span at residues 11–31; sequence KLPLFCLILQFITIILFAVFV. Residues 32–62 are Extracellular-facing; it reads RYDHESDARGWHDELKNHSTANADNDFYFRY. The N-linked (GlcNAc...) asparagine glycan is linked to Asn48. Residues 63 to 83 form a helical membrane-spanning segment; that stretch reads PSFQDVHVMIFIGFGFLMTFL. The Cytoplasmic segment spans residues 84–87; sequence KRYG. The helical transmembrane segment at 88–108 threads the bilayer; it reads FSSVAFNFLIAAFGLQWSTLI. The Extracellular segment spans residues 109 to 125; the sequence is QGFFHGFHDGKIHVGIE. The helical transmembrane segment at 126 to 146 threads the bilayer; that stretch reads SMINADFCTGAVLISFGAVLG. Topologically, residues 147 to 150 are cytoplasmic; sequence KTSP. Residues 151-171 form a helical membrane-spanning segment; sequence VQLIVMTLIEVTLFGINEYII. The Extracellular segment spans residues 172–179; that stretch reads LNIVGAKD. Residues 180 to 202 traverse the membrane as a helical segment; the sequence is AGGSMTIHTFGAYFGLIVSRVLY. Over 203–220 the chain is Cytoplasmic; sequence RADLDKSRQREGSVYHSD. The chain crosses the membrane as a helical span at residues 221 to 241; sequence LFAMIGTIYLWMFWPSFNSAV. Topologically, residues 242-252 are extracellular; sequence TAHGDDQHRTV. A helical transmembrane segment spans residues 253–273; the sequence is LNTYYSLAACTLATFGFSALL. At 274–283 the chain is on the cytoplasmic side; the sequence is NGEGKLDMVH. Residues 284 to 304 form a helical membrane-spanning segment; it reads IQNAALAGGVAVGTSGEMMLT. Pro305 is a topological domain (extracellular). Residues 306–326 form a helical membrane-spanning segment; it reads FGAMIAGTLAGIVSVLGYKYL. The Cytoplasmic portion of the chain corresponds to 327–347; that stretch reads TPVLDSKLKIQDTCGVHNLHG. A helical membrane pass occupies residues 348–368; that stretch reads MPGILGAVIGAIVALFATADI. The Extracellular segment spans residues 369–394; the sequence is YGDGMDDVFPMIFDGSRTAKQQSLYQ. Residues 395–415 form a helical membrane-spanning segment; it reads FLALLVALGFAIVGGTVVGFI. Residues 416 to 460 are Cytoplasmic-facing; sequence LKLPLFGTPSDAECFEDAVYWEVPGGEGHQQLTVVVNNEDPDTQA.

The protein belongs to the ammonium transporter (TC 2.A.49) family. Rh subfamily.

It is found in the basolateral cell membrane. It localises to the cytoplasmic vesicle membrane. Its function is as follows. Functions as a specific ammonium transporter. This is Ammonium transporter Rh type B-A (rhbg-a) from Xenopus laevis (African clawed frog).